A 375-amino-acid chain; its full sequence is ORC1-type DNA replication protein 3 (375 aa).

Residues 66 to 70 (TGKTT), Tyr209, and Arg221 each bind ATP.

It belongs to the CDC6/cdc18 family.

Functionally, involved in regulation of DNA replication. This is ORC1-type DNA replication protein 3 (cdc6c) from Haloarcula marismortui (strain ATCC 43049 / DSM 3752 / JCM 8966 / VKM B-1809) (Halobacterium marismortui).